Consider the following 255-residue polypeptide: Taurine import ATP-binding protein TauB (255 aa).

Residues Leu-2–Ser-229 form the ABC transporter domain. Gly-34–Thr-41 lines the ATP pocket.

This sequence belongs to the ABC transporter superfamily. Taurine importer (TC 3.A.1.17.1) family. In terms of assembly, the complex is composed of two ATP-binding proteins (TauB), two transmembrane proteins (TauC) and a solute-binding protein (TauA).

The protein resides in the cell inner membrane. The enzyme catalyses taurine(out) + ATP + H2O = taurine(in) + ADP + phosphate + H(+). In terms of biological role, part of the ABC transporter complex TauABC involved in taurine import. Responsible for energy coupling to the transport system. This chain is Taurine import ATP-binding protein TauB, found in Shigella flexneri serotype 5b (strain 8401).